The sequence spans 349 residues: MPPVSRILSYAPRVAIRPSSQLARPARAFAVGTVRYYSAEQPEEPLIRVTDLPAPNSGHIRVLELNRPKARNAISRALLASLREEVHSIARQYDAQTGEEIPTPSWNKRFGGIAGDSEKGPTRALVLASAVESSFCAGADLKERRGFTQEETNEFLANLRSTFAALDALPIPTISAISSRALGGGLELALCTHFRVLTSNAIVSLPETRLGIIPGAGGTHRLPRLIGLGRARDMIVTGRAVSGAEAYFLGLADRLVEVLPPDEQEAADTTDKDAALLSAAREAALTEAVRLASQICEGGPIGIRAALQAVQAPSQETENKMYERVIGTEDRNEALKAFAEKRKPVFKGR.

The transit peptide at 1-37 (MPPVSRILSYAPRVAIRPSSQLARPARAFAVGTVRYY) directs the protein to the mitochondrion.

The protein belongs to the enoyl-CoA hydratase/isomerase family. Homohexamer.

The protein localises to the mitochondrion. The enzyme catalyses (3S)-3-hydroxy-3-methylglutaryl-CoA = 3-methyl-(2E)-glutaconyl-CoA + H2O. It participates in amino-acid degradation; L-leucine degradation; (S)-3-hydroxy-3-methylglutaryl-CoA from 3-isovaleryl-CoA: step 3/3. Its function is as follows. 3-methylglutaconyl-CoA hydratase that catalyzes the fifth step in the leucine degradation pathway, the reversible hydration of 3-methylglutaconyl-CoA (3-MG-CoA) to 3-hydroxy-3-methylglutaryl-CoA (HMG-CoA). Involved in vegetative growth, conidiation and in the stress response. Controls mitochondrial morphology and mitophagy, which are critical for the infectious growth of the pathogen. The protein is Methylglutaconyl-CoA hydratase 1, mitochondrial of Pyricularia oryzae (strain 70-15 / ATCC MYA-4617 / FGSC 8958) (Rice blast fungus).